The following is a 344-amino-acid chain: Protein pelota homolog (344 aa).

This sequence belongs to the eukaryotic release factor 1 family. Pelota subfamily. Monomer. The cofactor is a divalent metal cation.

The protein localises to the cytoplasm. Its function is as follows. May function in recognizing stalled ribosomes, interact with stem-loop structures in stalled mRNA molecules, and effect endonucleolytic cleavage of the mRNA. May play a role in the release non-functional ribosomes and degradation of damaged mRNAs. Has endoribonuclease activity. The chain is Protein pelota homolog from Saccharolobus islandicus (strain Y.N.15.51 / Yellowstone #2) (Sulfolobus islandicus).